Reading from the N-terminus, the 1070-residue chain is uncharacterized protein (1070 aa).

One can recognise a UBA domain in the interval 477 to 523 (LIDTNQLLLRQLQQIVKLGIFNEKKIKEELKANKFNEQVALQILESE).

This is an uncharacterized protein from Sulfolobus islandicus rod-shaped virus 1 (SIRV-1).